The chain runs to 189 residues: Protein GrpE (189 aa).

A disordered region spans residues 1 to 37; sequence MSDSSKEKKKKFADMVSRQKGDDQQSDNHKQTDDLNE. Positions 17–33 are enriched in basic and acidic residues; that stretch reads SRQKGDDQQSDNHKQTD.

It belongs to the GrpE family. Homodimer.

It localises to the cytoplasm. Its function is as follows. Participates actively in the response to hyperosmotic and heat shock by preventing the aggregation of stress-denatured proteins, in association with DnaK and GrpE. It is the nucleotide exchange factor for DnaK and may function as a thermosensor. Unfolded proteins bind initially to DnaJ; upon interaction with the DnaJ-bound protein, DnaK hydrolyzes its bound ATP, resulting in the formation of a stable complex. GrpE releases ADP from DnaK; ATP binding to DnaK triggers the release of the substrate protein, thus completing the reaction cycle. Several rounds of ATP-dependent interactions between DnaJ, DnaK and GrpE are required for fully efficient folding. The sequence is that of Protein GrpE from Wolbachia sp. subsp. Drosophila simulans (strain wRi).